The following is a 124-amino-acid chain: Protein CYSTEINE-RICH TRANSMEMBRANE MODULE 10 (124 aa).

The interval Met1–Ser103 is disordered. 2 stretches are compositionally biased toward pro residues: residues Ala27–Tyr40 and Gly65–His88. A helical membrane pass occupies residues Lys101–Val118.

The protein belongs to the CYSTM1 family. In terms of assembly, heterodimers. Interacts with CYSTM7 and WIH1/CYSTM13. In terms of tissue distribution, mostly expressed in stems and,at low levels, in stems, roots, flowers, siliques and leaves.

The protein resides in the cell membrane. Its subcellular location is the cytoplasm. Functionally, involved in resistance to abiotic stress. In Arabidopsis thaliana (Mouse-ear cress), this protein is Protein CYSTEINE-RICH TRANSMEMBRANE MODULE 10.